The primary structure comprises 515 residues: Bifunctional purine biosynthesis protein PurH (515 aa).

In terms of domain architecture, MGS-like spans 1–145; that stretch reads MTKRALISVS…KNHASVTVVV (145 aa).

It belongs to the PurH family.

The enzyme catalyses (6R)-10-formyltetrahydrofolate + 5-amino-1-(5-phospho-beta-D-ribosyl)imidazole-4-carboxamide = 5-formamido-1-(5-phospho-D-ribosyl)imidazole-4-carboxamide + (6S)-5,6,7,8-tetrahydrofolate. The catalysed reaction is IMP + H2O = 5-formamido-1-(5-phospho-D-ribosyl)imidazole-4-carboxamide. Its pathway is purine metabolism; IMP biosynthesis via de novo pathway; 5-formamido-1-(5-phospho-D-ribosyl)imidazole-4-carboxamide from 5-amino-1-(5-phospho-D-ribosyl)imidazole-4-carboxamide (10-formyl THF route): step 1/1. The protein operates within purine metabolism; IMP biosynthesis via de novo pathway; IMP from 5-formamido-1-(5-phospho-D-ribosyl)imidazole-4-carboxamide: step 1/1. The polypeptide is Bifunctional purine biosynthesis protein PurH (Streptococcus pyogenes serotype M6 (strain ATCC BAA-946 / MGAS10394)).